The chain runs to 326 residues: Peroxidase 3 (326 aa).

The first 24 residues, 1–24 (MNCLIAIALSVSFFLVGIVGPIQA), serve as a signal peptide directing secretion. 4 disulfides stabilise this stretch: Cys35–Cys113, Cys68–Cys73, Cys119–Cys321, and Cys198–Cys231. His66 (proton acceptor) is an active-site residue. Positions 67, 70, 72, 74, and 76 each coordinate Ca(2+). 2 N-linked (GlcNAc...) asparagine glycosylation sites follow: Asn80 and Asn138. Pro161 provides a ligand contact to substrate. Asn166 is a glycosylation site (N-linked (GlcNAc...) asparagine). His191 contributes to the heme b binding site. Thr192 provides a ligand contact to Ca(2+). N-linked (GlcNAc...) asparagine glycosylation is found at Asn207 and Asn237. 3 residues coordinate Ca(2+): Asp244, Ser247, and Asp252.

Belongs to the peroxidase family. Classical plant (class III) peroxidase subfamily. It depends on heme b as a cofactor. Ca(2+) is required as a cofactor. Expressed in root cells.

Its subcellular location is the secreted. The enzyme catalyses 2 a phenolic donor + H2O2 = 2 a phenolic radical donor + 2 H2O. Functionally, removal of H(2)O(2), oxidation of toxic reductants, biosynthesis and degradation of lignin, suberization, auxin catabolism, response to environmental stresses such as wounding, pathogen attack and oxidative stress. These functions might be dependent on each isozyme/isoform in each plant tissue. This chain is Peroxidase 3 (PER3), found in Arabidopsis thaliana (Mouse-ear cress).